The sequence spans 183 residues: Photosystem I assembly protein Ycf4 (183 aa).

Helical transmembrane passes span 21 to 43 (YIWG…SSYL) and 63 to 85 (LVMC…LILW).

This sequence belongs to the Ycf4 family.

The protein resides in the plastid. Its subcellular location is the chloroplast thylakoid membrane. Seems to be required for the assembly of the photosystem I complex. The sequence is that of Photosystem I assembly protein Ycf4 from Chlorella vulgaris (Green alga).